Here is a 344-residue protein sequence, read N- to C-terminus: Heat-inducible transcription repressor HrcA (344 aa).

The protein belongs to the HrcA family.

Functionally, negative regulator of class I heat shock genes (grpE-dnaK-dnaJ and groELS operons). Prevents heat-shock induction of these operons. This chain is Heat-inducible transcription repressor HrcA, found in Streptococcus agalactiae serotype Ia (strain ATCC 27591 / A909 / CDC SS700).